A 574-amino-acid chain; its full sequence is Putative ABC transporter ATP-binding protein VV2_1533 (574 aa).

2 consecutive ABC transporter domains span residues 3–244 (IEFS…GIRE) and 299–533 (LDVR…ANLT). ATP-binding positions include 37 to 44 (GPSGSGKS) and 332 to 339 (GKNGSGKS).

Belongs to the ABC transporter superfamily.

Its subcellular location is the cell inner membrane. Functionally, probably part of an ABC transporter complex. Responsible for energy coupling to the transport system. This chain is Putative ABC transporter ATP-binding protein VV2_1533, found in Vibrio vulnificus (strain CMCP6).